The following is a 114-amino-acid chain: Cytochrome c oxidase assembly protein cox16, mitochondrial (114 aa).

A helical transmembrane segment spans residues 29-49; sequence PFLLFGLPFMSVIVAGSFILT.

The protein belongs to the COX16 family.

It is found in the mitochondrion inner membrane. Functionally, required for the assembly of the mitochondrial respiratory chain complex IV (CIV), also known as cytochrome c oxidase. May participate in merging the COX1 and COX2 assembly lines. This Neurospora crassa (strain ATCC 24698 / 74-OR23-1A / CBS 708.71 / DSM 1257 / FGSC 987) protein is Cytochrome c oxidase assembly protein cox16, mitochondrial (cox-9).